The primary structure comprises 733 residues: mRNA 3'-end-processing protein rna14 (733 aa).

The interval 1–45 is disordered; the sequence is MNSDDNVEADASSNIIKDSPKIKEQENTSTVNESDVLATSTTASS. Polar residues predominate over residues 27 to 45; it reads NTSTVNESDVLATSTTASS. HAT repeat units lie at residues 85-117, 119-150, 158-193, 204-237, 269-302, and 312-344; these read GKHE…SELA, NDFH…YIRR, QSRS…FLRS, QKLD…FENS, EGLR…WEQS, and MLQN…YFLS. Low complexity predominate over residues 404 to 414; sequence DSKASSSSESS. Positions 404–425 are disordered; that stretch reads DSKASSSSESSTDGNPQEKKLP. The stretch at 523 to 557 is one HAT 7 repeat; it reads NDETNARALFEKAIPRIAADEAKPIYQKWLDYESN.

It localises to the nucleus. The protein resides in the cytoplasm. Functionally, component of the cleavage factor IA (CFIA) complex, which is involved in the endonucleolytic cleavage during polyadenylation-dependent pre-mRNA 3'-end formation. The polypeptide is mRNA 3'-end-processing protein rna14 (rna14) (Schizosaccharomyces pombe (strain 972 / ATCC 24843) (Fission yeast)).